The primary structure comprises 465 residues: Soluble pyridine nucleotide transhydrogenase (465 aa).

35–44 (ERYNNVGGGC) contacts FAD.

It belongs to the class-I pyridine nucleotide-disulfide oxidoreductase family. It depends on FAD as a cofactor.

It is found in the cytoplasm. It catalyses the reaction NAD(+) + NADPH = NADH + NADP(+). Conversion of NADPH, generated by peripheral catabolic pathways, to NADH, which can enter the respiratory chain for energy generation. This is Soluble pyridine nucleotide transhydrogenase from Photorhabdus laumondii subsp. laumondii (strain DSM 15139 / CIP 105565 / TT01) (Photorhabdus luminescens subsp. laumondii).